The chain runs to 856 residues: Serine/threonine-protein phosphatase 6 regulatory subunit 1 (856 aa).

The interaction with PPP6C stretch occupies residues Ser10–Val403. A Phosphoserine modification is found at Ser232. Residue Thr524 is modified to Phosphothreonine. Phosphoserine occurs at positions 529, 530, and 531. Residues Asp621–Gly630 are compositionally biased toward acidic residues. 2 disordered regions span residues Asp621 to Glu770 and Arg792 to Gln856. Residues Ser633 and Ser636 each carry the phosphoserine modification. Residues Gln644 to Gln656 show a composition bias toward polar residues. Positions Asp667–Ala683 are enriched in acidic residues. 2 positions are modified to phosphoserine: Ser698 and Ser739. Residues Ala794 to Val809 show a composition bias toward polar residues. Phosphoserine is present on Ser826. The span at Pro842–Gln856 shows a compositional bias: low complexity.

The protein belongs to the SAPS family. In terms of assembly, protein phosphatase 6 (PP6) holoenzyme is proposed to be a heterotrimeric complex formed of the catalytic subunit, a SAPS domain-containing subunit (PP6R) and an ankyrin repeat-domain containing regulatory subunit (ARS). Interacts with PPP6C and NFKBIE. Interacts with ANKRD28, ANKRD44 and ANKRD52. As to expression, ubiquitous with highest expression in lung, spleen and bladder.

The protein localises to the cytoplasm. Functionally, regulatory subunit of protein phosphatase 6 (PP6). May function as a scaffolding PP6 subunit. Involved in the PP6-mediated dephosphorylation of NFKBIE opposing its degradation in response to TNF-alpha. The sequence is that of Serine/threonine-protein phosphatase 6 regulatory subunit 1 (Ppp6r1) from Mus musculus (Mouse).